The following is a 1353-amino-acid chain: DNA-directed RNA polymerase subunit beta' (1353 aa).

Residues 1 to 117 form a unknown region; sequence MSDNRLFTSV…AFQKLNDLFK (117 aa). Positions 118–1353 are DNA-directed RNA polymerase subunit beta'; that stretch reads LYNHFPSISS…SELAEKTNQN (1236 aa). Positions 189, 191, 203, and 206 each coordinate Zn(2+). Mg(2+)-binding residues include D578, D580, and D582.

The protein belongs to the RNA polymerase beta' chain family. In terms of assembly, the RNAP catalytic core consists of 2 alpha, 1 beta, 1 beta' and 1 omega subunit. When a sigma factor is associated with the core the holoenzyme is formed, which can initiate transcription. Mg(2+) is required as a cofactor. Zn(2+) serves as cofactor.

It carries out the reaction RNA(n) + a ribonucleoside 5'-triphosphate = RNA(n+1) + diphosphate. DNA-dependent RNA polymerase catalyzes the transcription of DNA into RNA using the four ribonucleoside triphosphates as substrates. The sequence is that of DNA-directed RNA polymerase subunit beta' from Onion yellows phytoplasma (strain OY-M).